The chain runs to 296 residues: Nitrogenase iron protein (296 aa).

10–17 lines the ATP pocket; that stretch reads GKGGIGKS. Residue cysteine 98 participates in [4Fe-4S] cluster binding. Arginine 101 carries the ADP-ribosylarginine; by dinitrogenase reductase ADP-ribosyltransferase modification. Cysteine 133 contributes to the [4Fe-4S] cluster binding site.

This sequence belongs to the NifH/BchL/ChlL family. In terms of assembly, homodimer. Requires [4Fe-4S] cluster as cofactor. Post-translationally, the reversible ADP-ribosylation of Arg-101 inactivates the nitrogenase reductase and regulates nitrogenase activity.

It catalyses the reaction N2 + 8 reduced [2Fe-2S]-[ferredoxin] + 16 ATP + 16 H2O = H2 + 8 oxidized [2Fe-2S]-[ferredoxin] + 2 NH4(+) + 16 ADP + 16 phosphate + 6 H(+). Functionally, the key enzymatic reactions in nitrogen fixation are catalyzed by the nitrogenase complex, which has 2 components: the iron protein and the molybdenum-iron protein. The chain is Nitrogenase iron protein from Magnetococcus marinus (strain ATCC BAA-1437 / JCM 17883 / MC-1).